We begin with the raw amino-acid sequence, 214 residues long: Cytolysin tenebrosin-B (214 aa).

A signal peptide spans 1–19 (MNRLIIVFIVVTMICAATA). A propeptide spanning residues 20–35 (LSTKRRINKEEKDEKR) is cleaved from the precursor. Positions 38–47 (AVAGAVIEGA) are plays an important role in the hemolytic activity. An N-terminal region region spans residues 46-65 (GATLTFNVLQTVLKALGDIS). Positions 89, 122, 140, 142, 168, 172, and 173 each coordinate phosphocholine. The interval 140–155 (SIPFDYNLYSNWWNVK) is trp-rich region, which is important for the binding to lipid membrane. The short motif at 179–181 (RGD) is the Cell attachment site, crucial for protein stability element.

The protein belongs to the actinoporin family. Sea anemone subfamily. Octamer or nonamer in membranes. Monomer in the soluble state.

The protein localises to the secreted. Its subcellular location is the nematocyst. It localises to the target cell membrane. Functionally, pore-forming protein that forms cations-selective hydrophilic pores of around 1 nm and causes cardiac stimulation and cytolysis. Pore formation is a multi-step process that involves specific recognition of membrane sphingomyelin (but neither cholesterol nor phosphatidylcholine) using aromatic rich region and adjacent phosphocholine (POC) binding site, firm binding to the membrane (mainly driven by hydrophobic interactions) accompanied by the transfer of the N-terminal region to the lipid-water interface and finally pore formation after oligomerization of monomers. The chain is Cytolysin tenebrosin-B from Actinia tenebrosa (Australian red waratah sea anemone).